Here is a 237-residue protein sequence, read N- to C-terminus: Immunoglobulin superfamily member 6 (237 aa).

A signal peptide spans 1-27 (MGPVSARRSRLRPEISLILFQVGMVGA). The Extracellular segment spans residues 28-152 (CTVYVLQPGY…ERLFSKEVRS (125 aa)). One can recognise an Ig-like C2-type domain in the interval 30–134 (VYVLQPGYLE…ELSPSAKHVG (105 aa)). Residues C51 and C118 are joined by a disulfide bond. Residues 153-173 (FLIVLLALLSVYITGVCVTFI) form a helical membrane-spanning segment. Over 174–237 (VLFKSKSNGP…RKALPNPGRA (64 aa)) the chain is Cytoplasmic. The segment covering 215 to 229 (TSHLPEQEGTDENRK) has biased composition (basic and acidic residues). The disordered stretch occupies residues 215–237 (TSHLPEQEGTDENRKALPNPGRA).

In terms of tissue distribution, ubiquitous with higher expression in immune tissue.

Its subcellular location is the membrane. This chain is Immunoglobulin superfamily member 6 (Igsf6), found in Mus musculus (Mouse).